A 195-amino-acid chain; its full sequence is Probable peroxygenase 4 (195 aa).

The EF-hand domain occupies 14-49 (EEDNFLQRHVAFFDRNKDGIVYPSETFQGFRAIGCG). A heme-binding site is contributed by His22. The Ca(2+) site is built by Asp27, Asn29, Asp31, and Glu38. The Proline-knot motif lies at 70 to 79 (PGKGFSIWFP). At Ser177 the chain carries Phosphoserine.

It belongs to the caleosin family. As to quaternary structure, homodimer. Heme b serves as cofactor. Ca(2+) is required as a cofactor. As to expression, expressed in roots, leaves, stems, shoots, flowers and germinated seeds. Barely detected in dry seeds prior to germination. Preferentially expressed in vascular bundles and in guard cells.

Its subcellular location is the lipid droplet. It carries out the reaction RH + ROOH = ROH + ROH.. Its function is as follows. Calcium-binding peroxygenase involved in the degradation of storage lipid in oil bodies. May be involved in the interaction between oil bodies and vacuoles during seed germination. Acts as a negative regulator of abscisic acid responses in non-seed tissues. The sequence is that of Probable peroxygenase 4 (PXG4) from Arabidopsis thaliana (Mouse-ear cress).